The primary structure comprises 337 residues: Large ribosomal subunit protein uL3 (337 aa).

It belongs to the universal ribosomal protein uL3 family. Part of the 50S ribosomal subunit. Forms a cluster with proteins L14 and L24e.

Functionally, one of the primary rRNA binding proteins, it binds directly near the 3'-end of the 23S rRNA, where it nucleates assembly of the 50S subunit. This chain is Large ribosomal subunit protein uL3, found in Methanospirillum hungatei JF-1 (strain ATCC 27890 / DSM 864 / NBRC 100397 / JF-1).